Here is a 119-residue protein sequence, read N- to C-terminus: MDILCSTLLLLTVPSWVLSQVTLRESGPALVKPTQTLTLTCTFSGFSLSTSGMCVSWIRQPPGKALEWLALIDWDDDKYYSTSLKTRLTISKDTSKNQVVLTMTNMDPVDTATYYCARI.

Positions M1–S19 are cleaved as a signal peptide. The residue at position 20 (Q20) is a Pyrrolidone carboxylic acid. Residues Q20–S44 are framework-1. An Ig-like domain is found at Q20 to I119. C41 and C116 are disulfide-bonded. The tract at residues G45–C54 is complementarity-determining-1. A framework-2 region spans residues V55 to L71. The tract at residues I72 to K78 is complementarity-determining-2. The framework-3 stretch occupies residues Y79–C116. Positions A117 to I119 are complementarity-determining-3.

In terms of assembly, immunoglobulins are composed of two identical heavy chains and two identical light chains; disulfide-linked.

It is found in the secreted. It localises to the cell membrane. Functionally, v region of the variable domain of immunoglobulin heavy chains that participates in the antigen recognition. Immunoglobulins, also known as antibodies, are membrane-bound or secreted glycoproteins produced by B lymphocytes. In the recognition phase of humoral immunity, the membrane-bound immunoglobulins serve as receptors which, upon binding of a specific antigen, trigger the clonal expansion and differentiation of B lymphocytes into immunoglobulins-secreting plasma cells. Secreted immunoglobulins mediate the effector phase of humoral immunity, which results in the elimination of bound antigens. The antigen binding site is formed by the variable domain of one heavy chain, together with that of its associated light chain. Thus, each immunoglobulin has two antigen binding sites with remarkable affinity for a particular antigen. The variable domains are assembled by a process called V-(D)-J rearrangement and can then be subjected to somatic hypermutations which, after exposure to antigen and selection, allow affinity maturation for a particular antigen. This Homo sapiens (Human) protein is Immunoglobulin heavy variable 2-70.